A 62-amino-acid polypeptide reads, in one-letter code: Small ribosomal subunit protein eS27 (62 aa).

The Zn(2+) site is built by C17, C20, C36, and C39. The C4-type zinc finger occupies C17–C39.

Belongs to the eukaryotic ribosomal protein eS27 family. In terms of assembly, part of the 30S ribosomal subunit. Requires Zn(2+) as cofactor.

The polypeptide is Small ribosomal subunit protein eS27 (Methanospirillum hungatei JF-1 (strain ATCC 27890 / DSM 864 / NBRC 100397 / JF-1)).